A 93-amino-acid polypeptide reads, in one-letter code: Small ribosomal subunit protein uS19 (93 aa).

It belongs to the universal ribosomal protein uS19 family.

Protein S19 forms a complex with S13 that binds strongly to the 16S ribosomal RNA. The chain is Small ribosomal subunit protein uS19 from Maridesulfovibrio salexigens (strain ATCC 14822 / DSM 2638 / NCIMB 8403 / VKM B-1763) (Desulfovibrio salexigens).